The primary structure comprises 824 residues: U-box domain-containing protein 24 (824 aa).

One can recognise a U-box domain in the interval 13–92 (GAFEAFVCPL…HEWRARNEEK (80 aa)). 9 ARM repeats span residues 133-172 (AASKDLVRRRGVLRAVAEMLKSGSRRLRLKSLQVLRVLVE), 175-214 (DDNKEELGKGDTIRTIIKFLSNEHVQERELAVSLLHELSG), 217-258 (PTCE…NLDR), 260-299 (DANVKQMADNGRLQPLLTRLLRGEPDTRVAMADYLGELAL), 300-339 (ANDDKAAVAEQAGPLLVGMLRTGATPAKEATLKALREISS), 341-385 (EASA…NLVA), 396-435 (DDDEDDDGGGGGRGRRRTLLSEDVVHSQLHLISNTGPAIG), 441-481 (VLAG…DIRV), and 486-525 (LLRNLAPYMGAELADALGGSLSSLLRAISSDGGGVTEEQA).

Interacts with BZR1, BZR2, BZR3 and GSK2. Auto-ubiquitinated. In terms of processing, phosphorylated by GSK2. Phosphorylation of PUB24 increases its cellular stability.

The protein resides in the cytoplasm. It localises to the cytosol. Its subcellular location is the nucleus. The enzyme catalyses S-ubiquitinyl-[E2 ubiquitin-conjugating enzyme]-L-cysteine + [acceptor protein]-L-lysine = [E2 ubiquitin-conjugating enzyme]-L-cysteine + N(6)-ubiquitinyl-[acceptor protein]-L-lysine.. It functions in the pathway protein modification; protein ubiquitination. In terms of biological role, E3 ubiquitin-protein ligase that functions as a negative regulator of brassinosteroid (BR) signaling. Targets BZR1, a positive regulator of BR signaling pathway, and promotes its degradation via the ubiquitin-26S proteasome pathway. The polypeptide is U-box domain-containing protein 24 (Oryza sativa subsp. japonica (Rice)).